Here is a 525-residue protein sequence, read N- to C-terminus: Vesicular inhibitory amino acid transporter (525 aa).

At 1 to 132 (MATLLRSKLT…WNVTNAIQGM (132 aa)) the chain is on the cytoplasmic side. The chain crosses the membrane as a helical span at residues 133 to 153 (FVLGLPYAILHGGYLGLFLII). At 154–204 (FAAVVCCYTGKILIACLYEENEDGEVVRVRDSYVAIANACCAPRFPTLGGR) the chain is on the lumenal, vesicle side. At tyrosine 186 the chain carries 3'-nitrotyrosine. A helical membrane pass occupies residues 205 to 225 (VVNVAQIIELVMTCILYVVVS). Topologically, residues 226-265 (GNLMYNSFPGLPVSQKSWSIIATAVLLPCAFLKNLKAVSK) are cytoplasmic. The chain crosses the membrane as a helical span at residues 266–286 (FSLLCTLAHFVINILVIAYCL). At 287-305 (SRARDWAWEKVKFYIDVKK) the chain is on the lumenal, vesicle side. Residues 306–326 (FPISIGIIVFSYTSQIFLPSL) form a helical membrane-spanning segment. Over 327–341 (EGNMQQPSEFHCMMN) the chain is Cytoplasmic. A helical membrane pass occupies residues 342–362 (WTHIAACVLKGLFALVAYLTW). The Lumenal, vesicle segment spans residues 363-383 (ADETKEVITDNLPGSIRAVVN). The helical transmembrane segment at 384 to 404 (LFLVAKALLSYPLPFFAAVEV) threads the bilayer. The Cytoplasmic segment spans residues 405 to 438 (LEKSLFQEGSRAFFPACYGGDGRLKSWGLTLRCA). Residues 439–459 (LVVFTLLMAIYVPHFALLMGL) form a helical membrane-spanning segment. The Lumenal, vesicle portion of the chain corresponds to 460–461 (TG). The chain crosses the membrane as a helical span at residues 462-482 (SLTGAGLCFLLPSLFHLRLLW). Over 483–489 (RKLLWHQ) the chain is Cytoplasmic. Residues 490–510 (VFFDVAIFVIGGICSVSGFVH) form a helical membrane-spanning segment. The Lumenal, vesicle segment spans residues 511–525 (SLEGLIEAYRTNAED).

It belongs to the amino acid/polyamine transporter 2 family. As to expression, brain and retina. Localized in horizontal cell tips at both rod and cone terminals.

The protein localises to the cytoplasmic vesicle membrane. It is found in the presynapse. It catalyses the reaction 4-aminobutanoate(out) + n H(+)(in) = 4-aminobutanoate(in) + n H(+)(out). It carries out the reaction glycine(out) + n H(+)(in) = glycine(in) + n H(+)(out). The enzyme catalyses beta-alanine(out) + n H(+)(in) = beta-alanine(in) + n H(+)(out). Chloride ions activate 4-aminobutanoate/H(+) transport. In terms of biological role, antiporter that exchanges vesicular protons for cytosolic 4-aminobutanoate or to a lesser extend glycine, thus allowing their secretion from nerve terminals. The transport is equally dependent on the chemical and electrical components of the proton gradient. May also transport beta-alanine. Acidification of GABAergic synaptic vesicles is a prerequisite for 4-aminobutanoate uptake. This is Vesicular inhibitory amino acid transporter from Mus musculus (Mouse).